Here is a 152-residue protein sequence, read N- to C-terminus: 6,7-dimethyl-8-ribityllumazine synthase (152 aa).

5-amino-6-(D-ribitylamino)uracil is bound by residues Phe-24, 56-58 (SFE), and 80-82 (VVV). A (2S)-2-hydroxy-3-oxobutyl phosphate-binding site is contributed by 85-86 (ET). The active-site Proton donor is the His-88. Phe-113 lines the 5-amino-6-(D-ribitylamino)uracil pocket. Arg-127 contributes to the (2S)-2-hydroxy-3-oxobutyl phosphate binding site.

This sequence belongs to the DMRL synthase family.

It catalyses the reaction (2S)-2-hydroxy-3-oxobutyl phosphate + 5-amino-6-(D-ribitylamino)uracil = 6,7-dimethyl-8-(1-D-ribityl)lumazine + phosphate + 2 H2O + H(+). The protein operates within cofactor biosynthesis; riboflavin biosynthesis; riboflavin from 2-hydroxy-3-oxobutyl phosphate and 5-amino-6-(D-ribitylamino)uracil: step 1/2. Catalyzes the formation of 6,7-dimethyl-8-ribityllumazine by condensation of 5-amino-6-(D-ribitylamino)uracil with 3,4-dihydroxy-2-butanone 4-phosphate. This is the penultimate step in the biosynthesis of riboflavin. In Thermococcus onnurineus (strain NA1), this protein is 6,7-dimethyl-8-ribityllumazine synthase.